The chain runs to 375 residues: Putative glutamate--cysteine ligase 2 (375 aa).

It belongs to the glutamate--cysteine ligase type 2 family. YbdK subfamily.

The catalysed reaction is L-cysteine + L-glutamate + ATP = gamma-L-glutamyl-L-cysteine + ADP + phosphate + H(+). Functionally, ATP-dependent carboxylate-amine ligase which exhibits weak glutamate--cysteine ligase activity. The protein is Putative glutamate--cysteine ligase 2 of Azoarcus sp. (strain BH72).